The following is a 218-amino-acid chain: MTGAPSHATFPPAVILAGGLSSRMGRPKAGLVLGGRSMLTRVIERLRPQVAGIAINLNADPDPASAFGLEVVPDTIPGFVGPLAGILAAMRHTVRKSPGASHVLTVPVDTPLFPKSLAARLKTAITSGGEIAVAFSAGEMHPLFALWPVALADDLEAWIHADEKRRVRAFIARHESATVEFPLIPTAAGPLDPFFNINTPEELRQAEAWLPYLEDREP.

GTP is bound by residues 16–18, Lys-28, Asn-56, Asp-74, and Asp-109; that span reads LAG. A Mg(2+)-binding site is contributed by Asp-109.

It belongs to the MobA family. Monomer. Mg(2+) is required as a cofactor.

The protein resides in the cytoplasm. It carries out the reaction Mo-molybdopterin + GTP + H(+) = Mo-molybdopterin guanine dinucleotide + diphosphate. Functionally, transfers a GMP moiety from GTP to Mo-molybdopterin (Mo-MPT) cofactor (Moco or molybdenum cofactor) to form Mo-molybdopterin guanine dinucleotide (Mo-MGD) cofactor. The polypeptide is Molybdenum cofactor guanylyltransferase (Rhizobium meliloti (strain 1021) (Ensifer meliloti)).